We begin with the raw amino-acid sequence, 195 residues long: Small ribosomal subunit protein eS7 (195 aa).

Residues threonine 146 and threonine 151 each carry the phosphothreonine modification. Phosphoserine is present on residues serine 172 and serine 173.

This sequence belongs to the eukaryotic ribosomal protein eS7 family. Component of the small ribosomal subunit (SSU). Mature yeast ribosomes consist of a small (40S) and a large (60S) subunit. The 40S small subunit contains 1 molecule of ribosomal RNA (18S rRNA) and at least 33 different proteins. The large 60S subunit contains 3 rRNA molecules (25S, 5.8S and 5S rRNA) and at least 46 different proteins. Interacts with snoRNA U3. uS11 interacts with MPP10. Component of the ribosomal small subunit (SSU) processome composed of at least 40 protein subunits and snoRNA U3.

Its subcellular location is the cytoplasm. It localises to the nucleus. The protein localises to the nucleolus. Component of the ribosome, a large ribonucleoprotein complex responsible for the synthesis of proteins in the cell. The small ribosomal subunit (SSU) binds messenger RNAs (mRNAs) and translates the encoded message by selecting cognate aminoacyl-transfer RNA (tRNA) molecules. The large subunit (LSU) contains the ribosomal catalytic site termed the peptidyl transferase center (PTC), which catalyzes the formation of peptide bonds, thereby polymerizing the amino acids delivered by tRNAs into a polypeptide chain. The nascent polypeptides leave the ribosome through a tunnel in the LSU and interact with protein factors that function in enzymatic processing, targeting, and the membrane insertion of nascent chains at the exit of the ribosomal tunnel. eS7 is involved in nucleolar processing of pre-18S ribosomal RNA and ribosome assembly. This is Small ribosomal subunit protein eS7 (rps7) from Schizosaccharomyces pombe (strain 972 / ATCC 24843) (Fission yeast).